The sequence spans 885 residues: Protein PTHB1 (885 aa).

Residues 1–406 are seven-bladed beta-propeller; the sequence is MSLFKARDWW…LQGVWPLTEQ (406 aa). The interaction with LZTL1 stretch occupies residues 684-764; it reads RDKTPAPLQH…FLPLQEDTQE (81 aa).

Part of BBSome complex, that contains BBS1, BBS2, BBS4, BBS5, BBS7, BBS8/TTC8, BBS9 and BBIP10. Interacts with LZTL1; the interaction mediates the association of LZTL1 with the BBsome complex and regulates BBSome ciliary trafficking.

Its subcellular location is the cell projection. It localises to the cilium membrane. The protein resides in the cytoplasm. It is found in the cytoskeleton. The protein localises to the microtubule organizing center. Its subcellular location is the centrosome. It localises to the centriolar satellite. In terms of biological role, the BBSome complex is thought to function as a coat complex required for sorting of specific membrane proteins to the primary cilia. The BBSome complex is required for ciliogenesis but is dispensable for centriolar satellite function. This ciliogenic function is mediated in part by the Rab8 GDP/GTP exchange factor, which localizes to the basal body and contacts the BBSome. Rab8(GTP) enters the primary cilium and promotes extension of the ciliary membrane. Firstly the BBSome associates with the ciliary membrane and binds to RAB3IP/Rabin8, the guanosyl exchange factor (GEF) for Rab8 and then the Rab8-GTP localizes to the cilium and promotes docking and fusion of carrier vesicles to the base of the ciliary membrane. Required for proper BBSome complex assembly and its ciliary localization. The protein is Protein PTHB1 (Bbs9) of Mus musculus (Mouse).